A 504-amino-acid chain; its full sequence is ATP synthase subunit alpha, chloroplastic (504 aa).

Position 170-177 (Gly170–Thr177) interacts with ATP.

This sequence belongs to the ATPase alpha/beta chains family. F-type ATPases have 2 components, CF(1) - the catalytic core - and CF(0) - the membrane proton channel. CF(1) has five subunits: alpha(3), beta(3), gamma(1), delta(1), epsilon(1). CF(0) has four main subunits: a, b, b' and c.

The protein resides in the plastid. It localises to the chloroplast thylakoid membrane. It carries out the reaction ATP + H2O + 4 H(+)(in) = ADP + phosphate + 5 H(+)(out). In terms of biological role, produces ATP from ADP in the presence of a proton gradient across the membrane. The alpha chain is a regulatory subunit. In Ostreococcus tauri, this protein is ATP synthase subunit alpha, chloroplastic.